We begin with the raw amino-acid sequence, 340 residues long: Pesticidal crystal protein Cry15Aa (340 aa).

The tract at residues 318–340 (RDYDKEHICHDQAEKYERDYDKE) is disordered.

Promotes colloidosmotic lysis by binding to the midgut epithelial cells of lepidopteran larvae. In Bacillus thuringiensis subsp. thompsoni, this protein is Pesticidal crystal protein Cry15Aa (cry15Aa).